The sequence spans 563 residues: MAPTAAVAGGGVEAEALLGLLQRVQSEALRAFGPNDFDPKLYVDLPLAADASAAAALASLPRAAPSRGEMEAYISRYFALAGSDLVAAADPPDFERDPPGFLPRVERAEARAWALEVHALWKDLTRRVAPAVAARPDRHTLLPLPGRVVVPGSRFREVYYWDSYWVVRGLLVSKMYETAKDIVLNLVYLVEKYGFVLNGARSYYTNRSQPPLLSSMVLDIYMATGDMAFVRRVFPSLLKEHSFWMSEVHNVAVMDNHGRVHNLSRYQAMWNKPRPESATIDEEFASKLSTAAKEKFYHQVASTAETGWDFSSRWMRDSTDMTTLTTSCIIPVDLNTFILKMEQDIAFFAKLIGESTTSEIFSEASKARHNAIDSVLWNADMEQWLDYWLPTDGNCQGVYQWKSISQNRAIFASNFVPLWLNAQHSGLEQFVDEAKSVRVMRSLQKSGLLQPAGIATSLSNTGQQWDFPNGWAPLQHLIVEGLLRSGSGEARELAEDIATRWVRTNYDAYKATGAMHEKYDVVTCGKSGGGGEYKPQTGFGWSNGVILSFLDEFGWPQDKKIDC.

Residues Arg154, 161–162, Asn198, 207–209, 274–276, and Gly307 each bind substrate; these read WD, RSQ, and RPE. Active-site proton donor/acceptor residues include Asp309 and Glu517. Glu532 contributes to the substrate binding site.

It belongs to the glycosyl hydrolase 37 family.

It catalyses the reaction alpha,alpha-trehalose + H2O = alpha-D-glucose + beta-D-glucose. Functionally, involved in the regulation of trehalose content by hydrolyzing trehalose to glucose. The protein is Probable trehalase of Oryza sativa subsp. japonica (Rice).